The sequence spans 61 residues: Small ribosomal subunit protein uS14 (61 aa).

4 residues coordinate Zn(2+): C24, C27, C40, and C43.

Belongs to the universal ribosomal protein uS14 family. Zinc-binding uS14 subfamily. In terms of assembly, part of the 30S ribosomal subunit. Contacts proteins S3 and S10. Zn(2+) is required as a cofactor.

In terms of biological role, binds 16S rRNA, required for the assembly of 30S particles and may also be responsible for determining the conformation of the 16S rRNA at the A site. The sequence is that of Small ribosomal subunit protein uS14 from Thermus thermophilus (strain ATCC BAA-163 / DSM 7039 / HB27).